A 259-amino-acid chain; its full sequence is Dihydroorotate dehydrogenase B (NAD(+)), electron transfer subunit (259 aa).

An FAD-binding FR-type domain is found at 3–103; that stretch reads KKQGRLTIVK…LGPLGQGFPL (101 aa). FAD contacts are provided by residues 54-57, 71-73, and 78-79; these read RPIS, IYR, and GT. C222, C227, C230, and C246 together coordinate [2Fe-2S] cluster.

It belongs to the PyrK family. Heterotetramer of 2 PyrK and 2 PyrD type B subunits. [2Fe-2S] cluster serves as cofactor. FAD is required as a cofactor.

The protein operates within pyrimidine metabolism; UMP biosynthesis via de novo pathway; orotate from (S)-dihydroorotate (NAD(+) route): step 1/1. Responsible for channeling the electrons from the oxidation of dihydroorotate from the FMN redox center in the PyrD type B subunit to the ultimate electron acceptor NAD(+). The protein is Dihydroorotate dehydrogenase B (NAD(+)), electron transfer subunit of Shouchella clausii (strain KSM-K16) (Alkalihalobacillus clausii).